A 426-amino-acid polypeptide reads, in one-letter code: Protein PHOSPHATE STARVATION RESPONSE 2 (426 aa).

3 disordered regions span residues 27 to 81, 96 to 123, and 198 to 247; these read ATLD…PLRS, YTNA…QYGG, and TQPQ…NSKT. Positions 69–81 are enriched in polar residues; the sequence is FQSSTGSVGPLRS. Low complexity-rich tracts occupy residues 102–119 and 205–225; these read YNSQ…NYGS and AAQS…SSQS. Polar residues predominate over residues 237–246; sequence SGASNTSNSK. The region spanning 243–303 is the HTH myb-type domain; the sequence is SNSKTRMRWT…HLQKYRTARY (61 aa). The segment at residues 274 to 299 is a DNA-binding region (H-T-H motif); it reads PKGVLKLMKADNLTIYHVKSHLQKYR. Disordered stretches follow at residues 302-326 and 382-426; these read RYRP…PSID and DKAV…SGDR. A compositionally biased stretch (basic and acidic residues) spans 303 to 322; sequence YRPELSEGSSEKKAASKEDI. 2 stretches are compositionally biased toward polar residues: residues 387–401 and 411–426; these read ASTS…SDLP and ENSQ…SGDR.

Interacts (via C-terminus) with SPX4 (via N-terminus) in the presence of inositol polyphosphate. Interacts (via C-terminus) with SPX1 and SPX2 (via SPX domain). Interacts with RLI1 in the nucleus.

The protein localises to the nucleus. It localises to the cytoplasm. Its function is as follows. Transcription factor involved in phosphate starvation signaling. Binds to P1BS, an imperfect palindromic sequence 5'-GNATATNC-3', to promote the expression of inorganic phosphate (Pi) starvation-responsive genes. Functionally redundant with PHR1 and PHR3 in regulating Pi starvation response and Pi homeostasis. Involved in both systematic and local Pi-signaling pathways. Regulates several Pi transporters. PHR2 binding to DNA is repressed redundantly by SPX1, SPX2 and SPX4 in a PI-dependent manner. The DNA-binding activity is also repressed by SPX4. Involved in root growth under Pi deprivation. Involved in the modulation of Pi response and homeostasis together with RLI1; promotes RLI1 expression in response to nitrate availability, thus triggering the nitrate-induced phosphate response (NIPR). In Oryza sativa subsp. indica (Rice), this protein is Protein PHOSPHATE STARVATION RESPONSE 2.